The sequence spans 322 residues: Phospho-N-acetylmuramoyl-pentapeptide-transferase (322 aa).

The next 10 membrane-spanning stretches (helical) occupy residues 6-26, 54-74, 82-102, 122-142, 145-165, 176-196, 200-220, 227-247, 255-275, and 302-322; these read ASCI…PLLI, TMGG…VTAW, VWIL…DDGI, IIIA…FGLY, FAGV…WLVG, LDGL…YIAF, NFAI…FFIF, IFMG…VSIM, LLVG…VISF, and VDIV…AIWG.

This sequence belongs to the glycosyltransferase 4 family. MraY subfamily. It depends on Mg(2+) as a cofactor.

The protein resides in the cell membrane. It carries out the reaction UDP-N-acetyl-alpha-D-muramoyl-L-alanyl-gamma-D-glutamyl-L-lysyl-D-alanyl-D-alanine + di-trans,octa-cis-undecaprenyl phosphate = Mur2Ac(oyl-L-Ala-gamma-D-Glu-L-Lys-D-Ala-D-Ala)-di-trans,octa-cis-undecaprenyl diphosphate + UMP. The protein operates within cell wall biogenesis; peptidoglycan biosynthesis. Its function is as follows. Catalyzes the initial step of the lipid cycle reactions in the biosynthesis of the cell wall peptidoglycan: transfers peptidoglycan precursor phospho-MurNAc-pentapeptide from UDP-MurNAc-pentapeptide onto the lipid carrier undecaprenyl phosphate, yielding undecaprenyl-pyrophosphoryl-MurNAc-pentapeptide, known as lipid I. The polypeptide is Phospho-N-acetylmuramoyl-pentapeptide-transferase (Lactobacillus helveticus (strain DPC 4571)).